Reading from the N-terminus, the 202-residue chain is Segregation and condensation protein B (202 aa).

It belongs to the ScpB family. In terms of assembly, homodimer. Homodimerization may be required to stabilize the binding of ScpA to the Smc head domains. Component of a cohesin-like complex composed of ScpA, ScpB and the Smc homodimer, in which ScpA and ScpB bind to the head domain of Smc. The presence of the three proteins is required for the association of the complex with DNA.

It localises to the cytoplasm. Its function is as follows. Participates in chromosomal partition during cell division. May act via the formation of a condensin-like complex containing Smc and ScpA that pull DNA away from mid-cell into both cell halves. The chain is Segregation and condensation protein B from Clostridium acetobutylicum (strain ATCC 824 / DSM 792 / JCM 1419 / IAM 19013 / LMG 5710 / NBRC 13948 / NRRL B-527 / VKM B-1787 / 2291 / W).